The primary structure comprises 188 residues: Holliday junction branch migration complex subunit RuvA (188 aa).

Positions 1-64 are domain I; the sequence is MIAGISGRVL…QDGITLYGFS (64 aa). Residues 65–143 are domain II; sequence NEMKKELFLS…SAGIKDMRIY (79 aa). Residue Y143 is a region of interest, flexible linker. Residues 143–186 form a domain III region; that stretch reads YHESLEALVSLGYPEKQAREAVKQVYREGMKTSELIKEALKFLS.

Belongs to the RuvA family. Homotetramer. Forms an RuvA(8)-RuvB(12)-Holliday junction (HJ) complex. HJ DNA is sandwiched between 2 RuvA tetramers; dsDNA enters through RuvA and exits via RuvB. An RuvB hexamer assembles on each DNA strand where it exits the tetramer. Each RuvB hexamer is contacted by two RuvA subunits (via domain III) on 2 adjacent RuvB subunits; this complex drives branch migration. In the full resolvosome a probable DNA-RuvA(4)-RuvB(12)-RuvC(2) complex forms which resolves the HJ.

The protein resides in the cytoplasm. Its function is as follows. The RuvA-RuvB-RuvC complex processes Holliday junction (HJ) DNA during genetic recombination and DNA repair, while the RuvA-RuvB complex plays an important role in the rescue of blocked DNA replication forks via replication fork reversal (RFR). RuvA specifically binds to HJ cruciform DNA, conferring on it an open structure. The RuvB hexamer acts as an ATP-dependent pump, pulling dsDNA into and through the RuvAB complex. HJ branch migration allows RuvC to scan DNA until it finds its consensus sequence, where it cleaves and resolves the cruciform DNA. Promotes Holliday junction (HJ) branch migration in conjunction with RuvB. This chain is Holliday junction branch migration complex subunit RuvA, found in Thermotoga maritima (strain ATCC 43589 / DSM 3109 / JCM 10099 / NBRC 100826 / MSB8).